Here is a 418-residue protein sequence, read N- to C-terminus: UDP-N-acetylglucosamine 1-carboxyvinyltransferase (418 aa).

A phosphoenolpyruvate-binding site is contributed by 22–23; sequence KN. Arginine 91 is a binding site for UDP-N-acetyl-alpha-D-glucosamine. Cysteine 115 functions as the Proton donor in the catalytic mechanism. A 2-(S-cysteinyl)pyruvic acid O-phosphothioketal modification is found at cysteine 115. UDP-N-acetyl-alpha-D-glucosamine is bound by residues aspartate 305 and isoleucine 327.

Belongs to the EPSP synthase family. MurA subfamily.

It localises to the cytoplasm. The catalysed reaction is phosphoenolpyruvate + UDP-N-acetyl-alpha-D-glucosamine = UDP-N-acetyl-3-O-(1-carboxyvinyl)-alpha-D-glucosamine + phosphate. It participates in cell wall biogenesis; peptidoglycan biosynthesis. Functionally, cell wall formation. Adds enolpyruvyl to UDP-N-acetylglucosamine. The polypeptide is UDP-N-acetylglucosamine 1-carboxyvinyltransferase (Aeromonas salmonicida (strain A449)).